The sequence spans 398 residues: Acetate kinase (398 aa).

Asparagine 8 provides a ligand contact to Mg(2+). Lysine 15 is a binding site for ATP. Residue arginine 89 coordinates substrate. Aspartate 146 (proton donor/acceptor) is an active-site residue. ATP contacts are provided by residues 206–210 (HIGNG), 283–285 (DMR), and 331–335 (GMGEN). A Mg(2+)-binding site is contributed by glutamate 383.

Belongs to the acetokinase family. Homodimer. Requires Mg(2+) as cofactor. Mn(2+) is required as a cofactor.

The protein resides in the cytoplasm. It catalyses the reaction acetate + ATP = acetyl phosphate + ADP. The protein operates within metabolic intermediate biosynthesis; acetyl-CoA biosynthesis; acetyl-CoA from acetate: step 1/2. Functionally, catalyzes the formation of acetyl phosphate from acetate and ATP. Can also catalyze the reverse reaction. The polypeptide is Acetate kinase (Streptococcus pyogenes serotype M4 (strain MGAS10750)).